The following is a 251-amino-acid chain: MVTTSQEQGHDALTATSAVTGLPQKRFYRQRAHSNPIADHSFDYPARPEDVDWSALYPNIQPDQQVEFADIGCGYGGFLVTLGEMFPQKLSIGMEIRVKVSDYVVDRIAALRLKSGKLNGDAYKNIACIRTNAMKYLPNYFRKGQLEKMFFLYPDPHFKRAKHKWRIINQALLSEYAYVLRQGGLVYTMTDVEDLHQWIVSHMNQHPLYERISPEDESQDPITPKLYQSSEEGAKVVRNKGDHFLAIFRRI.

Residues glycine 72, 95-96 (EI), 132-133 (NA), and leucine 152 each bind S-adenosyl-L-methionine. Residue aspartate 155 is part of the active site. 230–232 (SEE) contacts S-adenosyl-L-methionine.

Belongs to the class I-like SAM-binding methyltransferase superfamily. TrmB family.

The protein localises to the nucleus. It carries out the reaction guanosine(46) in tRNA + S-adenosyl-L-methionine = N(7)-methylguanosine(46) in tRNA + S-adenosyl-L-homocysteine. It functions in the pathway tRNA modification; N(7)-methylguanine-tRNA biosynthesis. Catalyzes the formation of N(7)-methylguanine at position 46 (m7G46) in tRNA. The polypeptide is tRNA (guanine-N(7)-)-methyltransferase (Drosophila willistoni (Fruit fly)).